The primary structure comprises 355 residues: Uroporphyrinogen decarboxylase (355 aa).

Residues 27 to 31 (RQAGR), Phe46, Asp77, Tyr154, Thr209, and His328 contribute to the substrate site.

This sequence belongs to the uroporphyrinogen decarboxylase family. As to quaternary structure, homodimer.

It is found in the cytoplasm. The catalysed reaction is uroporphyrinogen III + 4 H(+) = coproporphyrinogen III + 4 CO2. The protein operates within porphyrin-containing compound metabolism; protoporphyrin-IX biosynthesis; coproporphyrinogen-III from 5-aminolevulinate: step 4/4. In terms of biological role, catalyzes the decarboxylation of four acetate groups of uroporphyrinogen-III to yield coproporphyrinogen-III. This is Uroporphyrinogen decarboxylase from Vibrio vulnificus (strain CMCP6).